The primary structure comprises 364 residues: MNPLLSFKDVSKGFEDVQILNEINIDIEPGYFYTLLGPSGCGKTTILKLIAGFEYPDSGDIIYKDKPIGKMPPNKRKVNTVFQDYALFPHLNVFDNIAYGLKLKKLSKSEIKRKVTEALQLVKLSGYEHRQIQGMSGGQKQRVAIARAIVNEPEILLLDESLSALDLKLRTEMQYLLRELQSRLGITFIFVTHDQEEALALSDYIFVMKDGKIQQFGTPIDIYDEPVNRFVADFIGESNIVHGTMVEDFVVNIYGQNFDCVDMGIKENKKVEVVIRPEDISLVSQNDGLFKAKVDSMLFRGVHYEICCKDRKGYEWVIQSTKKANVGSEVGLYFEPEAIHIMVPGETEEEFDKRIESYEDYHHA.

The ABC transporter domain maps to 5–235 (LSFKDVSKGF…PVNRFVADFI (231 aa)). An ATP-binding site is contributed by 37–44 (GPSGCGKT).

It belongs to the ABC transporter superfamily. Spermidine/putrescine importer (TC 3.A.1.11.1) family. The complex is composed of two ATP-binding proteins (PotA), two transmembrane proteins (PotB and PotC) and a solute-binding protein (PotD).

The protein localises to the cell membrane. The catalysed reaction is ATP + H2O + polyamine-[polyamine-binding protein]Side 1 = ADP + phosphate + polyamineSide 2 + [polyamine-binding protein]Side 1.. Part of the ABC transporter complex PotABCD involved in spermidine/putrescine import. Responsible for energy coupling to the transport system. The chain is Spermidine/putrescine import ATP-binding protein PotA from Staphylococcus epidermidis (strain ATCC 35984 / DSM 28319 / BCRC 17069 / CCUG 31568 / BM 3577 / RP62A).